The primary structure comprises 133 residues: Phosphoribosyl-AMP cyclohydrolase (133 aa).

Residue aspartate 77 coordinates Mg(2+). Zn(2+) is bound at residue cysteine 78. 2 residues coordinate Mg(2+): aspartate 79 and aspartate 81. The Zn(2+) site is built by cysteine 95 and cysteine 102.

This sequence belongs to the PRA-CH family. Homodimer. Requires Mg(2+) as cofactor. It depends on Zn(2+) as a cofactor.

The protein localises to the cytoplasm. It catalyses the reaction 1-(5-phospho-beta-D-ribosyl)-5'-AMP + H2O = 1-(5-phospho-beta-D-ribosyl)-5-[(5-phospho-beta-D-ribosylamino)methylideneamino]imidazole-4-carboxamide. It functions in the pathway amino-acid biosynthesis; L-histidine biosynthesis; L-histidine from 5-phospho-alpha-D-ribose 1-diphosphate: step 3/9. Its function is as follows. Catalyzes the hydrolysis of the adenine ring of phosphoribosyl-AMP. This Pseudomonas fluorescens (strain Pf0-1) protein is Phosphoribosyl-AMP cyclohydrolase.